A 477-amino-acid polypeptide reads, in one-letter code: Acylamidase (477 aa).

Catalysis depends on charge relay system residues lysine 82 and serine 157. The Acyl-ester intermediate role is filled by serine 181.

Belongs to the amidase family.

The catalysed reaction is a monocarboxylic acid amide + H2O = a monocarboxylate + NH4(+). It carries out the reaction an anilide + H2O = aniline + a carboxylate + H(+). It catalyses the reaction an N-acyl-L-amino acid + H2O = an L-alpha-amino acid + a carboxylate. The enzyme catalyses an N-acetyl-L-cysteine-S-conjugate + H2O = an S-substituted L-cysteine + acetate. Its activity is regulated as follows. Amidase activity is completely suppressed by inhibitors of serine proteases (phenylmethylsulfonyl fluoride and diisopropyl fluorophosphate), partially inhibited by copper and mercury ions, but is not affected by inhibitors of aliphatic amidases (acetaldehyde and nitrophenyl disulfides) or by EDTA. Functionally, amidase with broad substrate specificity, catalyzing the hydrolysis of a wide range of N-substituted amides, and, to a lesser extent, the hydrolysis of non-substituted amides. Acid para-nitroanilides (4'-nitroacetanilide, Gly-pNA, Ala-pNA, Leu-pNA) are the best substrates for this enzyme. N-substituted acrylamides (isopropyl acrylamide, N,N-dimethyl-aminopropyl acrylamide, and methylene-bis-acrylamide), N-acetyl derivatives of glycine, alanine and leucine, and aliphatic amides (acetamide, acrylamide, isobutyramide, n-butyramide, and valeramide) can also be used as substrates but with less efficiency. This chain is Acylamidase, found in Rhodococcus erythropolis (Arthrobacter picolinophilus).